A 429-amino-acid polypeptide reads, in one-letter code: MELVINPVKKLRGNVSVPGDKSISHRAVMVGALAQGITEVSNFLMGEDCLATVKCLRAMGVSIEGPTNGKLKIYGVGLQGLREPADLLDTGNSGTTTRLLMGILAGQPFTSIITGDQSLKKRPMARVTKPLQDMGASFLGRNQNNLLPMAVQGGKLKPIDFHSPVASAQVKSAVLFAGLFAEGYTSVTEPAVSRDHSERMLKAFGAEVEVKNQTVRIKGLPQLKGMKITVPGDISSAAFLMVAAAILPGSDITIQGVGINPTRDGILEVLKQMGAGIEIMHSRLQGGEPVGDIRIKGAELQGTELSGPIIPRLIDEIPIIAVAAAYARGTTVIRDASELKVKESNRISSVVRELRKFGATVEELSDGLIIQGGTPLSGAVCQSYGDHRMAMAMAVAGLAASGQTLIEQADCIPVSFPGFSDVLKEVIVE.

Positions 21, 22, and 26 each coordinate 3-phosphoshikimate. Lysine 21 contacts phosphoenolpyruvate. Residues glycine 94 and arginine 122 each contribute to the phosphoenolpyruvate site. 3-phosphoshikimate-binding residues include serine 167, glutamine 169, aspartate 315, and lysine 342. Glutamine 169 is a binding site for phosphoenolpyruvate. Aspartate 315 functions as the Proton acceptor in the catalytic mechanism. Phosphoenolpyruvate is bound by residues arginine 346 and arginine 388.

It belongs to the EPSP synthase family. As to quaternary structure, monomer.

The protein localises to the cytoplasm. It catalyses the reaction 3-phosphoshikimate + phosphoenolpyruvate = 5-O-(1-carboxyvinyl)-3-phosphoshikimate + phosphate. Its pathway is metabolic intermediate biosynthesis; chorismate biosynthesis; chorismate from D-erythrose 4-phosphate and phosphoenolpyruvate: step 6/7. Catalyzes the transfer of the enolpyruvyl moiety of phosphoenolpyruvate (PEP) to the 5-hydroxyl of shikimate-3-phosphate (S3P) to produce enolpyruvyl shikimate-3-phosphate and inorganic phosphate. The polypeptide is 3-phosphoshikimate 1-carboxyvinyltransferase (Desulforamulus reducens (strain ATCC BAA-1160 / DSM 100696 / MI-1) (Desulfotomaculum reducens)).